The following is a 352-amino-acid chain: Protein YpbB (352 aa).

As to quaternary structure, interacts with RecS and SSB (ssbA); the 6 C-terminal residues of SSB are required for interaction with YpbB.

The protein localises to the cytoplasm. It is found in the nucleoid. This Bacillus subtilis (strain 168) protein is Protein YpbB (ypbB).